Consider the following 342-residue polypeptide: Holliday junction branch migration complex subunit RuvB (342 aa).

The segment at 4–182 (TDRLLSAGRR…FGIPIRLQFY (179 aa)) is large ATPase domain (RuvB-L). Residues leucine 21, arginine 22, glycine 63, lysine 66, threonine 67, threonine 68, arginine 172, tyrosine 182, and arginine 219 each contribute to the ATP site. Position 67 (threonine 67) interacts with Mg(2+). Residues 183 to 253 (TVEELERVVS…VADQSLNRLE (71 aa)) form a small ATPAse domain (RuvB-S) region. Residues 256–342 (NLGLDAMDRR…EAGQDGLFDV (87 aa)) are head domain (RuvB-H). Residues arginine 292, arginine 311, and arginine 316 each coordinate DNA.

It belongs to the RuvB family. Homohexamer. Forms an RuvA(8)-RuvB(12)-Holliday junction (HJ) complex. HJ DNA is sandwiched between 2 RuvA tetramers; dsDNA enters through RuvA and exits via RuvB. An RuvB hexamer assembles on each DNA strand where it exits the tetramer. Each RuvB hexamer is contacted by two RuvA subunits (via domain III) on 2 adjacent RuvB subunits; this complex drives branch migration. In the full resolvosome a probable DNA-RuvA(4)-RuvB(12)-RuvC(2) complex forms which resolves the HJ.

It is found in the cytoplasm. It catalyses the reaction ATP + H2O = ADP + phosphate + H(+). Functionally, the RuvA-RuvB-RuvC complex processes Holliday junction (HJ) DNA during genetic recombination and DNA repair, while the RuvA-RuvB complex plays an important role in the rescue of blocked DNA replication forks via replication fork reversal (RFR). RuvA specifically binds to HJ cruciform DNA, conferring on it an open structure. The RuvB hexamer acts as an ATP-dependent pump, pulling dsDNA into and through the RuvAB complex. RuvB forms 2 homohexamers on either side of HJ DNA bound by 1 or 2 RuvA tetramers; 4 subunits per hexamer contact DNA at a time. Coordinated motions by a converter formed by DNA-disengaged RuvB subunits stimulates ATP hydrolysis and nucleotide exchange. Immobilization of the converter enables RuvB to convert the ATP-contained energy into a lever motion, pulling 2 nucleotides of DNA out of the RuvA tetramer per ATP hydrolyzed, thus driving DNA branch migration. The RuvB motors rotate together with the DNA substrate, which together with the progressing nucleotide cycle form the mechanistic basis for DNA recombination by continuous HJ branch migration. Branch migration allows RuvC to scan DNA until it finds its consensus sequence, where it cleaves and resolves cruciform DNA. This is Holliday junction branch migration complex subunit RuvB from Rhizorhabdus wittichii (strain DSM 6014 / CCUG 31198 / JCM 15750 / NBRC 105917 / EY 4224 / RW1) (Sphingomonas wittichii).